A 24-amino-acid chain; its full sequence is Grammistin Pp 4b (24 aa).

In terms of assembly, exists as aggregates of 3-4 molecules. In terms of tissue distribution, expressed by the skin glands.

The protein localises to the secreted. Its function is as follows. Thanks to its abundant amphiphilic alpha-helices, it may integrate into membrane phospholipids, leading to lysis of the membrane. Its hemolytic activity is inhibited by phospholipids, but not by cholesterol. Has antibacterial activity with a broad spectrum against various species of bacteria including both Gram-positive and Gram-negative groups. Also has ichthyotoxic activity. This is Grammistin Pp 4b from Pogonoperca punctata (Clown grouper).